We begin with the raw amino-acid sequence, 262 residues long: Acyl-[acyl-carrier-protein]--UDP-N-acetylglucosamine O-acyltransferase (262 aa).

It belongs to the transferase hexapeptide repeat family. LpxA subfamily. As to quaternary structure, homotrimer.

Its subcellular location is the cytoplasm. It carries out the reaction a (3R)-hydroxyacyl-[ACP] + UDP-N-acetyl-alpha-D-glucosamine = a UDP-3-O-[(3R)-3-hydroxyacyl]-N-acetyl-alpha-D-glucosamine + holo-[ACP]. The protein operates within glycolipid biosynthesis; lipid IV(A) biosynthesis; lipid IV(A) from (3R)-3-hydroxytetradecanoyl-[acyl-carrier-protein] and UDP-N-acetyl-alpha-D-glucosamine: step 1/6. In terms of biological role, involved in the biosynthesis of lipid A, a phosphorylated glycolipid that anchors the lipopolysaccharide to the outer membrane of the cell. In Salmonella schwarzengrund (strain CVM19633), this protein is Acyl-[acyl-carrier-protein]--UDP-N-acetylglucosamine O-acyltransferase.